A 517-amino-acid polypeptide reads, in one-letter code: NAD(P)H-quinone oxidoreductase subunit 2 (517 aa).

A run of 14 helical transmembrane segments spans residues 16–36 (ILPE…DLIF), 43–63 (WLPY…YLAW), 80–100 (LSIV…LMSI), 110–130 (LAEF…LCGA), 133–153 (LVMI…MTGY), 168–188 (LLIG…LYGL), 211–231 (LGLA…ISAV), 245–265 (PTPV…ALAI), 279–299 (WHFV…VVAL), 307–327 (MLAY…VAGT), 335–355 (VFYL…IILF), 379–399 (LALS…GFFG), 401–421 (IYLF…LGLV), and 467–487 (VGIV…NPLF).

This sequence belongs to the complex I subunit 2 family. NDH-1 can be composed of about 15 different subunits; different subcomplexes with different compositions have been identified which probably have different functions.

The protein localises to the cellular thylakoid membrane. It catalyses the reaction a plastoquinone + NADH + (n+1) H(+)(in) = a plastoquinol + NAD(+) + n H(+)(out). It carries out the reaction a plastoquinone + NADPH + (n+1) H(+)(in) = a plastoquinol + NADP(+) + n H(+)(out). Functionally, NDH-1 shuttles electrons from an unknown electron donor, via FMN and iron-sulfur (Fe-S) centers, to quinones in the respiratory and/or the photosynthetic chain. The immediate electron acceptor for the enzyme in this species is believed to be plastoquinone. Couples the redox reaction to proton translocation, and thus conserves the redox energy in a proton gradient. Cyanobacterial NDH-1 also plays a role in inorganic carbon-concentration. This is NAD(P)H-quinone oxidoreductase subunit 2 from Rippkaea orientalis (strain PCC 8801 / RF-1) (Cyanothece sp. (strain PCC 8801)).